We begin with the raw amino-acid sequence, 558 residues long: Urocanate hydratase (558 aa).

NAD(+) contacts are provided by residues 54–55, glutamine 132, 178–180, glutamate 198, 244–245, 265–269, 275–276, and tyrosine 324; these read GG, GMG, NA, QTSAH, and YL. The active site involves cysteine 412. Glycine 494 lines the NAD(+) pocket.

The protein belongs to the urocanase family. NAD(+) is required as a cofactor.

The protein localises to the cytoplasm. It carries out the reaction 4-imidazolone-5-propanoate = trans-urocanate + H2O. Its pathway is amino-acid degradation; L-histidine degradation into L-glutamate; N-formimidoyl-L-glutamate from L-histidine: step 2/3. Functionally, catalyzes the conversion of urocanate to 4-imidazolone-5-propionate. In Acinetobacter baumannii (strain ACICU), this protein is Urocanate hydratase.